The chain runs to 507 residues: Maturase K (507 aa).

It belongs to the intron maturase 2 family. MatK subfamily.

It localises to the plastid. The protein resides in the chloroplast. In terms of biological role, usually encoded in the trnK tRNA gene intron. Probably assists in splicing its own and other chloroplast group II introns. The sequence is that of Maturase K from Fagopyrum tataricum (Tartarian buckwheat).